We begin with the raw amino-acid sequence, 65 residues long: Large ribosomal subunit protein bL35 (65 aa).

This sequence belongs to the bacterial ribosomal protein bL35 family.

The protein is Large ribosomal subunit protein bL35 of Syntrophobacter fumaroxidans (strain DSM 10017 / MPOB).